Consider the following 138-residue polypeptide: Membrane protein P8A7 (138 aa).

Helical transmembrane passes span 12–30 (ILVI…YLFV), 32–56 (GLFH…IVLL), 71–90 (YTYW…LILG), and 93–118 (GFFL…LLGC).

The protein resides in the membrane. The chain is Membrane protein P8A7 (pmpA) from Dictyostelium discoideum (Social amoeba).